The following is a 71-amino-acid chain: MPVIKVRENEPFDVALRRFKRSCEKAGVLAEVRRREFYEKPTTERKRAKASAVKRHAKKLARENARRTRLY.

The interval Thr43 to Tyr71 is disordered. A compositionally biased stretch (basic residues) spans Lys46 to Lys59. Positions Leu60–Tyr71 are enriched in basic and acidic residues.

The protein belongs to the bacterial ribosomal protein bS21 family.

The sequence is that of Small ribosomal subunit protein bS21 from Pectobacterium atrosepticum (strain SCRI 1043 / ATCC BAA-672) (Erwinia carotovora subsp. atroseptica).